A 97-amino-acid chain; its full sequence is Large ribosomal subunit protein bL28 (97 aa).

This sequence belongs to the bacterial ribosomal protein bL28 family.

The protein is Large ribosomal subunit protein bL28 of Rickettsia peacockii (strain Rustic).